The following is a 204-amino-acid chain: Proteasome subunit beta type-3 (204 aa).

It belongs to the peptidase T1B family. The 26S proteasome consists of a 20S proteasome core and two 19S regulatory subunits. The 20S proteasome core is composed of 28 subunits that are arranged in four stacked rings, resulting in a barrel-shaped structure. The two end rings are each formed by seven alpha subunits, and the two central rings are each formed by seven beta subunits. The catalytic chamber with the active sites is on the inside of the barrel.

The protein resides in the cytoplasm. Its subcellular location is the nucleus. Non-catalytic component of the proteasome, a multicatalytic proteinase complex which is characterized by its ability to cleave peptides with Arg, Phe, Tyr, Leu, and Glu adjacent to the leaving group at neutral or slightly basic pH. The proteasome has an ATP-dependent proteolytic activity. This chain is Proteasome subunit beta type-3 (PBC1), found in Oryza sativa subsp. japonica (Rice).